A 750-amino-acid chain; its full sequence is Nibrin (750 aa).

The FHA domain occupies 24–83; the sequence is YIVGRKNCAILIENDQSISRNHAVLRVNFPVTSLSQTDEIPTLTIKDNSKYGTFINEEKM. BRCT domains lie at 105–181 and 224–315; these read KFRV…SEFL and GKTF…LAVI. A mediates interaction with SP100 region spans residues 111-328; it reads EPLVVCSSCL…TESYCNPQGQ (218 aa). Residues 221 to 403 form an interaction with MTOR, MAPKAP1 and RICTOR region; it reads IFKGKTFVFL…SRKLLQGTCN (183 aa). Thr337 carries the phosphothreonine modification. Ser343 carries the post-translational modification Phosphoserine; by ATM. Phosphoserine occurs at positions 347 and 433. 2 disordered regions span residues 429-479 and 494-550; these read NYQL…SSCK and QPAG…RKRK. A Glycyl lysine isopeptide (Lys-Gly) (interchain with G-Cter in ubiquitin) cross-link involves residue Lys436. Positions 446-457 are enriched in polar residues; that stretch reads WSSQQQLNSIKN. Positions 461–467 match the Nuclear localization signal motif; the sequence is PCSRKRE. Residues 502–514 are compositionally biased toward basic and acidic residues; the sequence is KSKDHESQSETLD. 2 positions are modified to phosphoserine: Ser508 and Ser517. Lys528 is covalently cross-linked (Glycyl lysine isopeptide (Lys-Gly) (interchain with G-Cter in SUMO2)). Over residues 540-550 the composition is skewed to basic and acidic residues; sequence STEDLRARKRK. Residues Lys569 and Lys580 each participate in a glycyl lysine isopeptide (Lys-Gly) (interchain with G-Cter in SUMO2) cross-link. The span at 581–599 shows a compositional bias: basic and acidic residues; the sequence is QEADVSIRKKPRMDAERNQ. Residues 581 to 622 are disordered; the sequence is QEADVSIRKKPRMDAERNQHLNGGPVPESNSALQEDETGKKD. Residues Lys683, Lys687, and Lys732 each participate in a glycyl lysine isopeptide (Lys-Gly) (interchain with G-Cter in ubiquitin) cross-link. The FxF/Y motif motif lies at 737–746; that stretch reads ADDLFRYNPN.

Belongs to the Nibrin family. As to quaternary structure, component of the MRN complex composed of two heterodimers RAD50 and MRE11 associated with a single NBN. The MRN complexes dimerize on DNA to form joined MRN-MRN oligomers required for DNA double-strand break repair. The MRN complexes dimerize on DNA to form joined MRN-MRN oligomers required for DNA double-strand break repair. As part of the MRN complex, interacts with MCM9; the interaction recruits the complex to DNA repair sites. Component of the BASC complex, at least composed of BRCA1, MSH2, MSH6, MLH1, ATM, BLM, RAD50, MRE11 and NBN. Interacts with histone H2AX; this requires phosphorylation of H2AX on 'Ser-139' and promotes NBN recruitment to DNA damage sites. Interacts with (phosphorylated) MDC1; promoting NBN recruitment to DNA damage sites. Interacts with (phosphorylated) RAD17; promoting NBN recruitment to DNA damage sites. Interacts (via FxF/Y motif) with ATM. Interacts with HJURP. Interacts with INTS3. Interacts with KPNA2. Interacts with TERF2; interaction is disrupted upon NBN phosphorylation by CDK2. Interacts with (phosphorylated) RBBP8/CtIP; the interaction links the role of the MRN complex in DNA double-strand break sensing to resection. Interacts with SP100; recruits NBN to PML bodies. Interacts with ATF2. Interacts with MTOR, MAPKAP1 isoform 2 and RICTOR; indicative for an association with the mTORC2 complex. Interacts with MRNIP. Interacts with UFL1; promoting UFL1 recruitment to double-strand breaks following DNA damage. Interacts with CYREN (via XLF motif). Phosphorylated by ATM in response of ionizing radiation, and such phosphorylation is responsible intra-S phase checkpoint control and telomere maintenance. Phosphorylated at Ser-433 by CDK2 in S/G2 phases abolishes interaction with TERF2, enabling DCLRE1B/Apollo recruitment to telomeres. Phosphorylation at Ser-433 in response to dysfunctional telomeres promotes non-homologous end joining repair at telomeres, while dephosphorylation by PPP1CA promotes microhomology-mediated end-joining (MMEJ) repair. Post-translationally, ubiquitinated at Lys-436 via 'Lys-6'-linked ubiquitin chains by RNF8, promoting NBN recruitment to DNA double-strand breaks (DSBs). Ubiquitinated at Lys-687 via 'Lys-63'-linked ubiquitin chains by PELI1: ubiquitination takes place following PELI1 phosphorylation and promotes ATM activation and DNA repair. Ubiquitinated at Lys-732 via 'Lys-63'-linked ubiquitin chains by the SCF(SKP2) complex: ubiquitination takes place following SKP2 phosphorylation and promotes ATM activation and DNA repair. Present at approximately equal levels in the heart at fetal day 17, at relatively constant levels at postnatal days 10, 17 and 21 and at slightly lower levels in the adult heart. Barely detectable in the brain. Not detected in kidney, very low levels in liver and skeletal muscle and moderate levels in heart, lung and brain (at protein level).

The protein resides in the nucleus. It is found in the chromosome. Its subcellular location is the PML body. The protein localises to the telomere. Its function is as follows. Component of the MRN complex, which plays a central role in double-strand break (DSB) repair, DNA recombination, maintenance of telomere integrity and meiosis. The MRN complex is involved in the repair of DNA double-strand breaks (DSBs) via homologous recombination (HR), an error-free mechanism which primarily occurs during S and G2 phases. The complex (1) mediates the end resection of damaged DNA, which generates proper single-stranded DNA, a key initial steps in HR, and is (2) required for the recruitment of other repair factors and efficient activation of ATM and ATR upon DNA damage. The MRN complex possesses single-strand endonuclease activity and double-strand-specific 3'-5' exonuclease activity, which are provided by MRE11, to initiate end resection, which is required for single-strand invasion and recombination. Within the MRN complex, NBN acts as a protein-protein adapter, which specifically recognizes and binds phosphorylated proteins, promoting their recruitment to DNA damage sites. Recruits MRE11 and RAD50 components of the MRN complex to DSBs in response to DNA damage. Promotes the recruitment of PI3/PI4-kinase family members ATM, ATR, and probably DNA-PKcs to the DNA damage sites, activating their functions. Mediates the recruitment of phosphorylated RBBP8/CtIP to DSBs, leading to cooperation between the MRN complex and RBBP8/CtIP to initiate end resection. RBBP8/CtIP specifically promotes the endonuclease activity of the MRN complex to clear DNA ends containing protein adducts. The MRN complex is also required for the processing of R-loops. NBN also functions in telomere length maintenance via its interaction with TERF2: interaction with TERF2 during G1 phase preventing recruitment of DCLRE1B/Apollo to telomeres. NBN also promotes DNA repair choice at dysfunctional telomeres: NBN phosphorylation by CK2 promotes non-homologous end joining repair at telomeres, while unphosphorylated NBN promotes microhomology-mediated end-joining (MMEJ) repair. Enhances AKT1 phosphorylation possibly by association with the mTORC2 complex. The polypeptide is Nibrin (Nbn) (Rattus norvegicus (Rat)).